The primary structure comprises 124 residues: Large ribosomal subunit protein bL12 (124 aa).

It belongs to the bacterial ribosomal protein bL12 family. Homodimer. Part of the ribosomal stalk of the 50S ribosomal subunit. Forms a multimeric L10(L12)X complex, where L10 forms an elongated spine to which 2 to 4 L12 dimers bind in a sequential fashion. Binds GTP-bound translation factors.

In terms of biological role, forms part of the ribosomal stalk which helps the ribosome interact with GTP-bound translation factors. Is thus essential for accurate translation. The sequence is that of Large ribosomal subunit protein bL12 from Phytoplasma australiense.